The chain runs to 108 residues: Small ribosomal subunit protein bS16 (108 aa).

Residues Glu-82–Asn-108 form a disordered region. Residues Pro-96–Asn-108 show a composition bias toward basic residues.

It belongs to the bacterial ribosomal protein bS16 family.

In Mycoplasma mycoides subsp. mycoides SC (strain CCUG 32753 / NCTC 10114 / PG1), this protein is Small ribosomal subunit protein bS16.